The primary structure comprises 241 residues: Protein unc-119 homolog B-B (241 aa).

The interval methionine 1–serine 46 is disordered. A tetradecanoate-binding site is contributed by tyrosine 132.

It belongs to the PDE6D/unc-119 family.

It is found in the cell projection. The protein localises to the cilium. Its function is as follows. Myristoyl-binding protein that acts as a cargo adapter: specifically binds the myristoyl moiety of a subset of N-terminally myristoylated proteins and is required for their localization. Plays a key role in localization of proteins to the primary cilium membrane. The polypeptide is Protein unc-119 homolog B-B (unc119b-b) (Xenopus laevis (African clawed frog)).